We begin with the raw amino-acid sequence, 418 residues long: Creatine kinase U-type, mitochondrial (418 aa).

The transit peptide at 1–39 (MAGPFSRLLSARPGLRLLALAGAGSLTAGILLRPESVGA) directs the protein to the mitochondrion. The interval 40–64 (AAAERRRLYPPSAEYPDLRKHNNCM) is cardiolipin-binding. The region spanning 46 to 132 (RLYPPSAEYP…FDPVIQERHN (87 aa)) is the Phosphagen kinase N-terminal domain. Serine 152 carries the phosphoserine modification. Residues 159–401 (YVLSSRVRTG…NYLIDCERRL (243 aa)) enclose the Phosphagen kinase C-terminal domain. 162 to 166 (SSRVR) is a binding site for ATP. Phosphoserine is present on serine 197. Threonine 214 carries the phosphothreonine modification. Residue histidine 225 participates in ATP binding. Serine 233 bears the Phosphoserine mark. Residues arginine 270, arginine 326, and 354 to 359 (RGTGGV) contribute to the ATP site. Phosphothreonine is present on threonine 356. Serine 366 is modified (phosphoserine). Aspartate 369 serves as a coordination point for ATP.

This sequence belongs to the ATP:guanido phosphotransferase family. Exists as an octamer composed of four MTCK homodimers.

Its subcellular location is the mitochondrion inner membrane. It catalyses the reaction creatine + ATP = N-phosphocreatine + ADP + H(+). Its function is as follows. Reversibly catalyzes the transfer of phosphate between ATP and various phosphogens (e.g. creatine phosphate). Creatine kinase isoenzymes play a central role in energy transduction in tissues with large, fluctuating energy demands, such as skeletal muscle, heart, brain and spermatozoa. The chain is Creatine kinase U-type, mitochondrial (Ckmt1) from Mus musculus (Mouse).